The primary structure comprises 118 residues: V-type proton ATPase subunit G 2 (118 aa).

A coiled-coil region spans residues 8–57; the sequence is IQQLLQAEKRAAEKVADARKRKARRLKQAKEEAQMEVDQYRREREQEFQS. The segment at 25–90 is disordered; it reads ARKRKARRLK…VQGMQSSQQR (66 aa). Residues 35–55 show a composition bias toward basic and acidic residues; the sequence is QAKEEAQMEVDQYRREREQEF. 2 stretches are compositionally biased toward polar residues: residues 56 to 69 and 78 to 89; these read QSKQQAAMGSQGNL and RRQVQGMQSSQQ.

Belongs to the V-ATPase G subunit family. As to quaternary structure, V-ATPase is a heteromultimeric enzyme made up of two complexes: the ATP-hydrolytic V1 complex and the proton translocation V0 complex. The V1 complex consists of three catalytic AB heterodimers that form a heterohexamer, three peripheral stalks each consisting of EG heterodimers, one central rotor including subunits D and F, and the regulatory subunits C and H. The proton translocation complex V0 consists of the proton transport subunit a, a ring of proteolipid subunits c9c'', rotary subunit d, subunits e and f, and the accessory subunits ATP6AP1/Ac45 and ATP6AP2/PRR. In terms of tissue distribution, expressed in brain (at protein level).

The protein localises to the melanosome. It is found in the cytoplasmic vesicle. Its subcellular location is the clathrin-coated vesicle membrane. Its function is as follows. Subunit of the V1 complex of vacuolar(H+)-ATPase (V-ATPase), a multisubunit enzyme composed of a peripheral complex (V1) that hydrolyzes ATP and a membrane integral complex (V0) that translocates protons. V-ATPase is responsible for acidifying and maintaining the pH of intracellular compartments and in some cell types, is targeted to the plasma membrane, where it is responsible for acidifying the extracellular environment. This Bos taurus (Bovine) protein is V-type proton ATPase subunit G 2.